The sequence spans 440 residues: Protein OSB3, chloroplastic/mitochondrial (440 aa).

A chloroplast and mitochondrion-targeting transit peptide spans 1–61 (MNLISRTLTR…AKVSVKPPLN (61 aa)). In terms of domain architecture, SSB spans 80-178 (ISNWINLIGF…VMVQNLNFVQ (99 aa)). 3 PDF region regions span residues 218 to 270 (WKHL…LKLE), 294 to 342 (WKDL…SKLP), and 380 to 428 (WKNL…SKLP).

In terms of tissue distribution, expressed primarily in the female gametophyte and in the floral abscission zone.

It is found in the mitochondrion. The protein resides in the plastid. The protein localises to the chloroplast. Its function is as follows. Binds single-stranded DNA. The chain is Protein OSB3, chloroplastic/mitochondrial (OSB3) from Arabidopsis thaliana (Mouse-ear cress).